A 2222-amino-acid chain; its full sequence is Protein SWEETIE (2222 aa).

HEAT repeat units lie at residues 37–75, 228–265, 331–368, 510–540, 541–578, 611–648, 768–807, 898–936, 968–1008, and 1029–1066; these read LLCF…LVTL, SEFD…LGMH, SELQ…GVID, PARL…SEKE, AGWL…GNPE, CNDG…LVDI, QGML…GLKA, MALS…TIEA, QGIG…WQEI, and VSVH…KDPV. A disordered region spans residues 1133–1165; it reads IAENDPAYTRENLGDDDEDMVSSSSGKSIRANP. 10 HEAT repeats span residues 1238–1269, 1270–1306, 1312–1354, 1372–1410, 1434–1474, 1550–1586, 1783–1820, 1836–1874, 1880–1917, and 1966–2006; these read MRPI…LLEQ, YQAQ…TSGI, VAVK…AHAS, VEFE…NLKK, EAWP…LEAE, DLCQ…NCPK, VMLK…RYNN, GDIV…HSIT, GFMS…LVSH, and AMDI…QVST. The tract at residues 1992–2203 is disordered; the sequence is EALSTMPTSF…DESSKEHVGA (212 aa). Residues 1996 to 2009 are compositionally biased toward polar residues; that stretch reads TMPTSFNQVSTVES. Residues 2010–2027 are compositionally biased toward acidic residues; that stretch reads GTDEEEEEEEDDDDDDWD. Polar residues predominate over residues 2028-2040; that stretch reads TFQSFPASTNLEG. The span at 2062-2072 shows a compositional bias: acidic residues; that stretch reads QDDESNAEETD. Basic and acidic residues-rich tracts occupy residues 2073–2096 and 2108–2124; these read DQHL…SKEV and TRED…EETV. The span at 2150 to 2164 shows a compositional bias: polar residues; it reads NEQSVESKNLESENI. A compositionally biased stretch (basic and acidic residues) spans 2191–2202; the sequence is SPEDESSKEHVG.

The protein belongs to the HEATR5 family.

In terms of biological role, may regulate multiple metabolic, hormonal and stress-related pathways. Required for carbohydrate metabolism and homoeostasis. May also monitor ethylene biosynthesis and senescence. The polypeptide is Protein SWEETIE (Arabidopsis thaliana (Mouse-ear cress)).